The chain runs to 77 residues: Small ribosomal subunit protein bS16c (77 aa).

Belongs to the bacterial ribosomal protein bS16 family.

The protein localises to the plastid. It is found in the cyanelle. The chain is Small ribosomal subunit protein bS16c from Cyanophora paradoxa.